An 887-amino-acid chain; its full sequence is Transportin-2 (887 aa).

HEAT repeat units follow at residues 9–36, 41–79, 88–121, 127–164, 171–201, 214–241, 253–280, 296–386, 394–422, 434–461, 475–508, 516–549, 557–595, 603–654, 665–696, 704–737, 745–780, 788–821, 830–861, and 864–884; these read GLQQVLQLLKDSQSPNTATQRIVQDKLK, FPDFNNYLIFVLTRLKSEDEPTRSLSGLILKNNVKAHYQ, FIKQECLNNIGDASSLIRATIGILITTIASKGEL, LLPQLCNLLNSEDYNTCEGAFGALQKICEDSSELLDSD, NIMIPKFLQFFKHCSPKIRSHAIACVNQFIM, FIEHLFALAVDDDPEVRKNVCRALVMLL, HSIIQYMLQRTQDHDENVALEACEFWLT, VQLI…LANV, HLLPLLKGLLFHPEWVVKESGILVLGAIA, PELIPHLIQCLSDKKALVRSIACWTLSR, LKPLMTELLKRILDGNKRVQEAACSAFATLEEEA, LSYILDTLVFAFGKYQHKNLLILYDAIGTLADSV, EYIQKLMPPLIQKWNELKDEDKDLFPLLECLSSVATALQ, EPVY…GLGG, IMTLLFQCMQDSMPEVRQSSFALLGDLTKACF, AEFMPILGTNLNPEFISVCNNATWAIGEICMQMG, QMVLNNLVEIINRPNTPKTLLENTAITIGRLGYVCP, QQFIRPWCTSLRNIRDNEEKDSAFRGICMMIGVN, IFFCDAVASWVSPKDDLRDMFYKILHGFKDQV, and ENWQQFSEQFPPLLKERLAAF. The Importin N-terminal domain occupies 31 to 99; sequence VQDKLKQLNQ…KQECLNNIGD (69 aa). Residues 344-363 are disordered; that stretch reads TLTHEAERPDSSEDAEDDDD. K852 carries the N6-acetyllysine modification.

The protein belongs to the importin beta family. Importin beta-2 subfamily.

The protein localises to the cytoplasm. It is found in the nucleus. Functionally, probably functions in nuclear protein import as nuclear transport receptor. Serves as receptor for nuclear localization signals (NLS) in cargo substrates. Is thought to mediate docking of the importin/substrate complex to the nuclear pore complex (NPC) through binding to nucleoporin and the complex is subsequently translocated through the pore by an energy requiring, Ran-dependent mechanism. At the nucleoplasmic side of the NPC, Ran binds to the importin, the importin/substrate complex dissociates and importin is re-exported from the nucleus to the cytoplasm where GTP hydrolysis releases Ran. The directionality of nuclear import is thought to be conferred by an asymmetric distribution of the GTP- and GDP-bound forms of Ran between the cytoplasm and nucleus. This chain is Transportin-2 (Tnpo2), found in Mus musculus (Mouse).